The sequence spans 386 residues: Cysteine protease Amb a 11.0101 (386 aa).

Residues 1 to 22 form the signal peptide; sequence MEINKLVCFSFSLVLILGLVES. The T-cell epitope. MHC class II peptide able to activate CD(4+) T cells of the ragweed pollen-allergic patients indicated by significantly increased IL-2 production compared to non-allergic individuals. Not recognized by IgE of the patients allergic to ragweed pollen stretch occupies residues 6–20; it reads LVCFSFSLVLILGLV. Residues 23–108 constitute a propeptide, activation peptide; it reads FHYHERELES…SKISHFQALR (86 aa). Asparagine 127 carries N-linked (GlcNAc...) (complex) asparagine glycosylation. 3 disulfides stabilise this stretch: cysteine 152–cysteine 193, cysteine 186–cysteine 226, and cysteine 283–cysteine 334. The active site involves cysteine 155. The segment at 173–186 is B-cell epitope. Binds to IgE of the patients allergic to ragweed pollen; that stretch reads GKLVKFSEQQLVDC. Active-site residues include histidine 289 and asparagine 310. The tract at residues 340-377 is disordered; it reads SSFPIMNDPNPPKDDPNGPKDDPDAPKDPKFKTTQRLQ. Over residues 350–370 the composition is skewed to basic and acidic residues; the sequence is PPKDDPNGPKDDPDAPKDPKF. A propeptide spans 371–386 (removed in mature form); it reads KTTQRLQGIRTKLLEL.

It belongs to the peptidase C1 family. As to quaternary structure, homodimer. Autocatalytic proteolytic cleavage of N-terminal activation peptide. Post-translationally, N-glycosylated. Glycosylation is not required for binding to IgE. As to expression, expressed in pollen (at protein and mRNA level).

With respect to regulation, activated by L-cysteine. Inhibited by cysteine protease inhibitor E64 (L-trans-epoxysuccinyl-leucylamide-(4-guanido)-butane). Inhibited by cysteine/serine protease inhibitor leupeptin. Not inhibited by serine protease inhibitors 4-(2-aminoethyl)benzenesulfonyl fluoride hydrochloride (AEBSF) and phenylmethanesulfonyl fluoride (PMSF), metallo protease inhibitor bestatin or aspartic protease inhibitor pepstatin A. Its function is as follows. Cysteine protease. Hydrolyzes casein and synthetic peptide Boc-Val-Leu-Lys-7-amino-4-methylcoumarin (Boc-VLK-AMC) in vitro. The chain is Cysteine protease Amb a 11.0101 from Ambrosia artemisiifolia (Common ragweed).